A 234-amino-acid chain; its full sequence is Phosphoribosylaminoimidazole-succinocarboxamide synthase (234 aa).

Belongs to the SAICAR synthetase family.

It carries out the reaction 5-amino-1-(5-phospho-D-ribosyl)imidazole-4-carboxylate + L-aspartate + ATP = (2S)-2-[5-amino-1-(5-phospho-beta-D-ribosyl)imidazole-4-carboxamido]succinate + ADP + phosphate + 2 H(+). It functions in the pathway purine metabolism; IMP biosynthesis via de novo pathway; 5-amino-1-(5-phospho-D-ribosyl)imidazole-4-carboxamide from 5-amino-1-(5-phospho-D-ribosyl)imidazole-4-carboxylate: step 1/2. The chain is Phosphoribosylaminoimidazole-succinocarboxamide synthase from Streptococcus agalactiae serotype III (strain NEM316).